The primary structure comprises 555 residues: CTP synthase (555 aa).

The segment at Met1–Ile271 is amidoligase domain. Ser19 serves as a coordination point for CTP. Residue Ser19 participates in UTP binding. Residues Ser20–Leu25 and Asp77 each bind ATP. Residues Asp77 and Glu145 each contribute to the Mg(2+) site. Residues Asp152–Glu154, Lys192–Gln197, and Lys228 each bind CTP. UTP is bound by residues Lys192–Gln197 and Lys228. In terms of domain architecture, Glutamine amidotransferase type-1 spans Arg297–Ala537. Gly358 serves as a coordination point for L-glutamine. Cys385 functions as the Nucleophile; for glutamine hydrolysis in the catalytic mechanism. Residues Leu386–Gln389, Glu409, and Arg466 each bind L-glutamine. Residues His510 and Glu512 contribute to the active site. Residues Arg535–Gly555 form a disordered region.

The protein belongs to the CTP synthase family. As to quaternary structure, homotetramer.

The enzyme catalyses UTP + L-glutamine + ATP + H2O = CTP + L-glutamate + ADP + phosphate + 2 H(+). It catalyses the reaction L-glutamine + H2O = L-glutamate + NH4(+). It carries out the reaction UTP + NH4(+) + ATP = CTP + ADP + phosphate + 2 H(+). Its pathway is pyrimidine metabolism; CTP biosynthesis via de novo pathway; CTP from UDP: step 2/2. Allosterically activated by GTP, when glutamine is the substrate; GTP has no effect on the reaction when ammonia is the substrate. The allosteric effector GTP functions by stabilizing the protein conformation that binds the tetrahedral intermediate(s) formed during glutamine hydrolysis. Inhibited by the product CTP, via allosteric rather than competitive inhibition. In terms of biological role, catalyzes the ATP-dependent amination of UTP to CTP with either L-glutamine or ammonia as the source of nitrogen. Regulates intracellular CTP levels through interactions with the four ribonucleotide triphosphates. This chain is CTP synthase, found in Anaeromyxobacter dehalogenans (strain 2CP-1 / ATCC BAA-258).